The primary structure comprises 234 residues: Large ribosomal subunit protein uL1 (234 aa).

The protein belongs to the universal ribosomal protein uL1 family. As to quaternary structure, part of the 50S ribosomal subunit.

Its function is as follows. Binds directly to 23S rRNA. The L1 stalk is quite mobile in the ribosome, and is involved in E site tRNA release. In terms of biological role, protein L1 is also a translational repressor protein, it controls the translation of the L11 operon by binding to its mRNA. In Serratia proteamaculans (strain 568), this protein is Large ribosomal subunit protein uL1.